The chain runs to 114 residues: Small ribosomal subunit protein uS17 (114 aa).

This sequence belongs to the universal ribosomal protein uS17 family. As to quaternary structure, part of the 30S ribosomal subunit.

Functionally, one of the primary rRNA binding proteins, it binds specifically to the 5'-end of 16S ribosomal RNA. The chain is Small ribosomal subunit protein uS17 from Aeropyrum pernix (strain ATCC 700893 / DSM 11879 / JCM 9820 / NBRC 100138 / K1).